The sequence spans 457 residues: Dynein regulatory complex protein 10 (457 aa).

Coiled-coil stretches lie at residues 101-127 (EKAS…DQER), 209-258 (IQDI…LHQV), and 292-381 (QQDI…AESE). Residues 397 to 426 (MVRAATLIQAMWKGYLVRSMLRSRKKKRVK) enclose the IQ domain. Residues 419–457 (SRKKKRVKSKGKDKGKGKEKPKEEKGKEKKAKGKGKGKK) are disordered. The segment covering 428 to 445 (KGKDKGKGKEKPKEEKGK) has biased composition (basic and acidic residues). A compositionally biased stretch (basic residues) spans 446-457 (EKKAKGKGKGKK).

The protein belongs to the DRC10 family. Component of the nexin-dynein regulatory complex (N-DRC). Interacts with CFAP52.

It is found in the cytoplasm. Its subcellular location is the cytoskeleton. The protein localises to the flagellum axoneme. In terms of biological role, component of the nexin-dynein regulatory complex (N-DRC), a key regulator of ciliary/flagellar motility which maintains the alignment and integrity of the distal axoneme and regulates microtubule sliding in motile axonemes. The sequence is that of Dynein regulatory complex protein 10 (Iqcd) from Rattus norvegicus (Rat).